Consider the following 229-residue polypeptide: Large ribosomal subunit protein uL1 (229 aa).

It belongs to the universal ribosomal protein uL1 family. As to quaternary structure, part of the 50S ribosomal subunit.

Functionally, binds directly to 23S rRNA. The L1 stalk is quite mobile in the ribosome, and is involved in E site tRNA release. Its function is as follows. Protein L1 is also a translational repressor protein, it controls the translation of the L11 operon by binding to its mRNA. This chain is Large ribosomal subunit protein uL1, found in Listeria innocua serovar 6a (strain ATCC BAA-680 / CLIP 11262).